We begin with the raw amino-acid sequence, 68 residues long: UPF0435 protein SAB1812c (68 aa).

Belongs to the UPF0435 family.

The sequence is that of UPF0435 protein SAB1812c from Staphylococcus aureus (strain bovine RF122 / ET3-1).